The primary structure comprises 560 residues: Transcription termination factor 5, mitochondrial (560 aa).

The N-terminal 23 residues, 1 to 23 (MLRNGQNQAQLLARSLGQLARGM), are a transit peptide targeting the mitochondrion. A disordered region spans residues 23–47 (MASSKRVSSKKEDLKPKLPKPPTVE).

Belongs to the mTERF family. In terms of assembly, probably binds to the mTTF-DNA complex.

Its subcellular location is the mitochondrion. In terms of biological role, binds promoter DNA and regulates initiation of transcription. Regulates mitochondrial replication and transcription. Required for normal topology and maintenance of mitochondrial DNA (mtDNA) levels. Regulates mtDNA replication by re-activating replication after replication pausing. Likely to regulate replication pausing by coordinating with the mitochondrial termination factor mTTF which promotes replication pausing. Their function in replication pausing prevents unregulated replication that may occur for example by collisions between the machineries of DNA replication and transcription during mtDNA synthesis. This ensures the incorporation of RNA transcripts into replication intermediates at the replication fork and allows for proper fork progression. Possibly functions downstream of Dref which activates genes involved in mtDNA replication and maintenance. This Drosophila melanogaster (Fruit fly) protein is Transcription termination factor 5, mitochondrial.